The following is a 7968-amino-acid chain: MDQPQFSGAPRFLTRPKAFVVSVGKDATLSCQIVGNPTPQVSWEKDQQPVAAGARFRLAQDGDLYRLTILDLALGDSGQYVCRARNAIGEAFAAVGLQVDAEAACAEQAPHFLLRPTSIRVREGSEATFRCRVGGSPRPAVSWSKDGRRLGEPDGPRVRVEELGEASALRIRAARPRDGGTYEVRAENPLGAASAAAALVVDSDAADTASRPGTSTAALLAHLQRRREAMRAEGAPASPPSTGTRTCTVTEGKHARLSCYVTGEPKPETVWKKDGQLVTEGRRHVVYEDAQENFVLKILFCKQSDRGLYTCTASNLVGQTYSSVLVVVREPAVPFKKRLQDLEVREKESATFLCEVPQPSTEAAWFKEETRLWASAKYGIEEEGTERRLTVRNVSADDDAVYICETPEGSRTVAELAVQGNLLRKLPRKTAVRVGDTAMFCVELAVPVGPVHWLRNQEEVVAGGRVAISAEGTRHTLTISQCCLEDVGQVAFMAGDCQTSTQFCVSAPRKPPLQPPVDPVVKARMESSVILSWSPPPHGERPVTIDGYLVEKKKLGTYTWIRCHEAEWVATPELTVADVAEEGNFQFRVSALNSFGQSPYLEFPGTVHLAPKLAVRTPLKAVQAVEGGEVTFSVDLTVASAGEWFLDGQALKASSVYEIHCDRTRHTLTIREVPASLHGAQLKFVANGIESSIRMEVRAAPGLTANKPPAAAAREVLARLHEEAQLLAELSDQAAAVTWLKDGRTLSPGPKYEVQASAGRRVLLVRDVARDDAGLYECVSRGGRIAYQLSVQGLARFLHKDMAGSCVDAVAGGPAQFECETSEAHVHVHWYKDGMELGHSGERFLQEDVGTRHRLVAATVTRQDEGTYSCRVGEDSVDFRLRVSEPKVVFAKEQLARRKLQAEAGASATLSCEVAQAQTEVTWYKDGKKLSSSSKVCMEATGCTRRLVVQQAGQADAGEYSCEAGGQRLSFHLDVKEPKVVFAKDQVAHSEVQAEAGASATLSCEVAQAQTEVMWYKDGKKLSSSLKVHVEAKGCRRRLVVQQAGKTDAGDYSCEARGQRVSFRLHITEPKMMFAKEQSVHNEVQAEAGASAMLSCEVAQAQTEVTWYKDGKKLSSSSKVGMEVKGCTRRLVLPQAGKADAGEYSCEAGGQRVSFHLHITEPKGVFAKEQSVHNEVQAEAGTTAMLSCEVAQPQTEVTWYKDGKKLSSSSKVRMEVKGCTRRLVVQQVGKADAGEYSCEAGGQRVSFQLHITEPKAVFAKEQLVHNEVRTEAGASATLSCEVAQAQTEVTWYKDGKKLSSSSKVRIEAAGCMRQLVVQQAGQADAGEYTCEAGGQRLSFHLDVSEPKAVFAKEQLAHRKVQAEAGAIATLSCEVAQAQTEVTWYKDGKKLSSSSKVRMEAVGCTRRLVVQQACQADTGEYSCEAGGQRLSFSLDVAEPKVVFAKEQPVHREVQAQAGASTTLSCEVAQAQTEVMWYKDGKKLSFSSKVRMEAVGCTRRLVVQQAGQAVAGEYSCEAGSQRLSFHLHVAEPKAVFAKEQPASREVQAEAGTSATLSCEVAQAQTEVTWYKDGKKLSSSSKVRMEAVGCTRRLVVQEAGQADAGEYSCKAGDQRLSFHLHVAEPKVVFAKEQPAHREVQAEAGASATLSCEVAQAQTEVTWYKDGKKLSSSSKVRVEAVGCTRRLVVQQAGQAEAGEYSCEAGGQQLSFRLHVAELEPQISERPCRREPLVVKEHEDIILTATLATPSAATVTWLKDGVEIRRSKRHETASQGDTHTLTVHGAQVLDSAIYSCRVGAEGQDFPVQVEEVAAKFCRLLEPVCGELGGTVTLACELSPACAEVVWRCGNTQLRVGKRFQMVAEGPVRSLTVLGLRAEDAGEYVCESRDDHTSAQLTVSVPRVVKFMSGLSTVVAEEGGEATFQCVVSPSDVAVVWFRDGALLQPSEKFAISQSGASHSLTISDLVLEDAGQITVEAEGASSSAALRVREAPVLFKKKLEPQTVEERSSVTLEVELTRPWPELRWTRNATALAPGKNVEIHAEGARHRLVLHNVGFADRGFFGCETPDDKTQAKLTVEMRQVRLVRGLQAVEAREQGTATMEVQLSHADVDGSWTRDGLRFQQGPTCHLAVRGPMHTLTLSGLRPEDSGLMVFKAEGVHTSARLVVTELPVSFSRPLQDVVTTEKEKVTLECELSRPNVDVRWLKDGVELRAGKTMAIAAQGACRSLTIYRCEFADQGVYVCDAHDAQSSASVKVQGRTYTLIYRRVLAEDAGEIQFVAENAESRAQLRVKELPVTLVRPLRDKIAMEKHRGVLECQVSRASAQVRWFKGSQELQPGPKYELVSDGLYRKLIISDVHAEDEDTYTCDAGDVKTSAQFFVEEQSITIVRGLQDVTVMEPAPAWFECETSIPSVRPPKWLLGKTVLQAGGNVGLEQEGTVHRLMLRRTCSTMTGPVHFTVGKSRSSARLVVSDIPVVLTRPLEPKTGRELQSVVLSCDFRPAPKAVQWYKDDTPLSPSEKFKMSLEGQMAELRILRLMPADAGVYRCQAGSAHSSTEVTVEAREVTVTGPLQDAEATEEGWASFSCELSHEDEEVEWSLNGMPLYNDSFHEISHKGRRHTLVLKSIQRADAGIVRASSLKVSTSARLEVRVKPVVFLKALDDLSAEERGTLALQCEVSDPEAHVVWRKDGVQLGPSDKYDFLHTAGTRGLVVHDVSPEDAGLYTCHVGSEETRARVRVHDLHVGITKRLKTMEVLEGESCSFECVLSHESASDPAMWTVGGKTVGSSSRFQATRQGRKYILVVREAAPSDAGEVVFSVRGLTSKASLIVRERPAAIIKPLEDQWVAPGEDVELRCELSRAGTPVHWLKDRKAIRKSQKYDVVCEGTMAMLVIRGASLKDAGEYTCEVEASKSTASLHVEEKANCFTEELTNLQVEEKGTAVFTCKTEHPAATVTWRKGLLELRASGKHQPSQEGLTLRLTISALEKADSDTYTCDIGQAQSRAQLLVQGRRVHIIEDLEDVDVQEGSSATFRCRISPANYEPVHWFLDKTPLHANELNEIDAQPGGYHVLTLRQLALKDSGTIYFEAGDQRASAALRVTEKPSVFSRELTDATITEGEDLTLVCETSTCDIPVCWTKDGKTLRGSARCQLSHEGHRAQLLITGATLQDSGRYKCEAGGACSSSIVRVHARPVRFQEALKDLEVLEGGAATLRCVLSSVAAPVKWCYGNNVLRPGDKYSLRQEGAMLELVVRNLRPQDSGRYSCSFGDQTTSATLTVTALPAQFIGKLRNKEATEGATATLRCELSKAAPVEWRKGSETLRDGDRYCLRQDGAMCELQIRGLAMVDAAEYSCVCGEERTSASLTIRPMPAHFIGRLRHQESIEGATATLRCELSKAAPVEWRKGRESLRDGDRHSLRQDGAVCELQICGLAVADAGEYSCVCGEERTSATLTVKALPAKFTEGLRNEEAVEGATAMLWCELSKVAPVEWRKGPENLRDGDRYILRQEGTRCELQICGLAMADAGEYLCVCGQERTSATLTIRALPARFIEDVKNQEAREGATAVLQCELNSAAPVEWRKGSETLRDGDRYSLRQDGTKCELQIRGLAMADTGEYSCVCGQERTSAMLTVRALPIKFTEGLRNEEATEGATAVLRCELSKMAPVEWWKGHETLRDGDRHSLRQDGARCELQIRGLVAEDAGEYLCMCGKERTSAMLTVRAMPSKFIEGLRNEEATEGDTATLWCELSKAAPVEWRKGHETLRDGDRHSLRQDGSRCELQIRGLAVVDAGEYSCVCGQERTSATLTVRALPARFIEDVKNQEAREGATAVLQCELSKAAPVEWRKGSETLRGGDRYSLRQDGTRCELQIHGLSVADTGEYSCVCGQERTSATLTVKAPQPVFREPLQSLQAEEGSTATLQCELSEPTATVVWSKGGLQLQANGRREPRLQGCTAELVLQDLQREDTGEYTCTCGSQATSATLTVTAAPVRFLRELQHQEVDEGGTAHLCCELSRAGASVEWRKGSLQLFPCAKYQMVQDGAAAELLVRGVEQEDAGDYTCDTGHTQSMASLSVRVPRPKFKTRLQSLEQETGDIARLCCQLSDAESGAVVQWLKEGVELHAGPKYEMRSQGATRELLIHQLEAKDTGEYACVTGGQKTAASLRVTEPEVTIVRGLVDAEVTADEDVEFSCEVSRAGATGVQWCLQGLPLQSNEVTEVAVRDGRIHTLRLKGVTPEDAGTVSFHLGNHASSAQLTVRAPEVTILEPLQDVQLSEGQDASFQCRLSRASGQEARWALGGVPLQANEMNDITVEQGTLHLLTLHKVTLEDAGTVSFHVGTCSSEAQLKVTAKNTVVRGLENVEALEGGEALFECQLSQPEVAAHTWLLDDEPVHTSENAEVVFFENGLRHLLLLKNLRPQDSCRVTFLAGDMVTSAFLTVRGWRLEILEPLKNAAVRAGAQACFTCTLSEAVPVGEASWYINGAAVQPDDSDWTVTADGSHHALLLRSAQPHHAGEVTFACRDAVASARLTVLGLPDPPEDAEVVARSSHTVTLSWAAPMSDGGGGLCGYRVEVKEGATGQWRLCHELVPGPECVVDGLAPGETYRFRVAAVGPVGAGEPVHLPQTVRLAEPPKPVPPQPSAPESRQVAAGEDVSLELEVVAEAGEVIWHKGMERIQPGGRFEVVSQGRQQMLVIKGFTAEDQGEYHCGLAQGSICPAAATFQVALSPASVDEAPQPSLPPEAAQEGDLHLLWEALARKRRMSREPTLDSISELPEEDGRSQRLPQEAEEVAPDLSEGYSTADELARTGDADLSHTSSDDESRAGTPSLVTYLKKAGRPGTSPLASKVGAPAAPSVKPQQQQEPLAAVRPPLGDLSTKDLGDPSMDKAAVKIQAAFKGYKVRKEMKQQEGPMFSHTFGDTEAQVGDALRLECVVASKADVRARWLKDGVELTDGRHHHIDQLGDGTCSLLITGLDRADAGCYTCQVSNKFGQVTHSACVVVSGSESEAESSSGGELDDAFRRAARRLHRLFRTKSPAEVSDEELFLSADEGPAEPEEPADWQTYREDEHFICIRFEALTEARQAVTRFQEMFATLGIGVEIKLVEQGPRRVEMCISKETPAPVVPPEPLPSLLTSDAAPVFLTELQNQEVQDGYPVSFDCVVTGQPMPSVRWFKDGKLLEEDDHYMINEDQQGGHQLIITAVVPADMGVYRCLAENSMGVSSTKAELRVDLTSTDYDTAADATESSSYFSAQGYLSSREQEGTESTTDEGQLPQVVEELRDLQVAPGTRLAKFQLKVKGYPAPRLYWFKDGQPLTASAHIRMTDKKILHTLEIISVTREDSGQYAAYISNAMGAAYSSARLLVRGPDEPEEKPASDVHEQLVPPRMLERFTPKKVKKGSSITFSVKVEGRPVPTVHWLREEAERGVLWIGPDTPGYTVASSAQQHSLVLLDVGRQHQGTYTCIASNAAGQALCSASLHVSGLPKVEEQEKVKEALISTFLQGTTQAISAQGLETASFADLGGQRKEEPLAAKEALGHLSLAEVGTEEFLQKLTSQITEMVSAKITQAKLQVPGGDSDEDSKTPSASPRHGRSRPSSSIQESSSESEDGDARGEIFDIYVVTADYLPLGAEQDAITLREGQYVEVLDAAHPLRWLVRTKPTKSSPSRQGWVSPAYLDRRLKLSPEWGAAEAPEFPGEAVSEDEYKARLSSVIQELLSSEQAFVEELQFLQSHHLQHLERCPHVPIAVAGQKAVIFRNVRDIGRFHSSFLQELQQCDTDDDVAMCFIKNQAAFEQYLEFLVGRVQAESVVVSTAIQEFYKKYAEEALLAGDPSQPPPPPLQHYLEQPVERVQRYQALLKELIRNKARNRQNCALLEQAYAVVSALPQRAENKLHVSLMENYPGTLQALGEPIRQGHFIVWEGAPGARMPWKGHNRHVFLFRNHLVICKPRRDSRTDTVSYVFRNMMKLSSIDLNDQVEGDDRAFEVWQEREDSVRKYLLQARTAIIKSSWVKEICGIQQRLALPVWRPPDFEEELADCTAELGETVKLACRVTGTPKPVISWYKDGKAVQVDPHHILIEDPDGSCALILDSLTGVDSGQYMCFAASAAGNCSTLGKILVQVPPRFVNKVRASPFVEGEDAQFTCTIEGAPYPQIRWYKDGALLTTGNKFQTLSEPRSGLLVLVIRAASKEDLGLYECELVNRLGSARASAELRIQSPMLQAQEQCHREQLVAAVEDTTLERADQEVTSVLKRLLGPKAPGPSTGDLTGPGPCPRGAPALQETGSQPPVTGTSEAPAVPPRVPQPLLHEGPEQEPEAIARAQEWTVPIRMEGAAWPGAGTGELLWDVHSHVVRETTQRTYTYQAIDTHTARPPSMQVTIEDVQAQTGGTAQFEAIIEGDPQPSVTWYKDSVQLVDSTRLSQQQEGTTYSLVLRHVASKDAGVYTCLAQNTGGQVLCKAELLVLGGDNEPDSEKQSHRRKLHSFYEVKEEIGRGVFGFVKRVQHKGNKILCAAKFIPLRSRTRAQAYRERDILAALSHPLVTGLLDQFETRKTLILILELCSSEELLDRLYRKGVVTEAEVKVYIQQLVEGLHYLHSHGVLHLDIKPSNILMVHPAREDIKICDFGFAQNITPAELQFSQYGSPEFVSPEIIQQNPVSEASDIWAMGVISYLSLTCSSPFAGESDRATLLNVLEGRVSWSSPMAAHLSEDAKDFIKATLQRAPQARPSAAQCLSHPWFLKSMPAEEAHFINTKQLKFLLARSRWQRSLMSYKSILVMRSIPELLRGPPDSPSLGVARHLCRDTGGSSSSSSSSDNELAPFARAKSLPPSPVTHSPLLHPRGFLRPSASLPEEAEASERSTEAPAPPASPEGAGPPAAQGCVPRHSVIRSLFYHQAGESPEHGALAPGSRRHPARRRHLLKGGYIAGALPGLREPLMEHRVLEEEAAREEQATLLAKAPSFETALRLPASGTHLAPGHSHSLEHDSPSTPRPSSEACGEAQRLPSAPSGGAPIRDMGHPQGSKQLPSTGGHPGTAQPERPSPDSPWGQPAPFCHPKQGSAPQEGCSPHPAVAPCPPGSFPPGSCKEAPLVPSSPFLGQPQAPPAPAKASPPLDSKMGPGDISLPGRPKPGPCSSPGSASQASSSQVSSLRVGSSQVGTEPGPSLDAEGWTQEAEDLSDSTPTLQRPQEQATMRKFSLGGRGGYAGVAGYGTFAFGGDAGGMLGQGPMWARIAWAVSQSEEEEQEEARAESQSEEQQEARAESPLPQVSARPVPEVGRAPTRSSPEPTPWEDIGQVSLVQIRDLSGDAEAADTISLDISEVDPAYLNLSDLYDIKYLPFEFMIFRKVPKSAQPEPPSPMAEEELAEFPEPTWPWPGELGPHAGLEITEESEDVDALLAEAAVGRKRKWSSPSRSLFHFPGRHLPLDEPAELGLRERVKASVEHISRILKGRPEGLEKEGPPRKKPGLASFRLSGLKSWDRAPTFLRELSDETVVLGQSVTLACQVSAQPAAQATWSKDGAPLESSSRVLISATLKNFQLLTILVVVAEDLGVYTCSVSNALGTVTTTGVLRKAERPSSSPCPDIGEVYADGVLLVWKPVESYGPVTYIVQCSLEGGSWTTLASDIFDCCYLTSKLSRGGTYTFRTACVSKAGMGPYSSPSEQVLLGGPSHLASEEESQGRSAQPLPSTKTFAFQTQIQRGRFSVVRQCWEKASGRALAAKIIPYHPKDKTAVLREYEALKGLRHPHLAQLHAAYLSPRHLVLILELCSGPELLPCLAERASYSESEVKDYLWQMLSATQYLHNQHILHLDLRSENMIITEYNLLKVVDLGNAQSLSQEKVLPSDKFKDYLETMAPELLEGQGAVPQTDIWAIGVTAFIMLSAEYPVSSEGARDLQRGLRKGLVRLSRCYAGLSGGAVAFLRSTLCAQPWGRPCASSCLQCPWLTEEGPACSRPAPVTFPTARLRVFVRNREKRRALLYKRHNLAQVR.

Ig-like domains are found at residues 10-100 (PRFL…LQVD), 110-202 (PHFL…LVVD), 236-322 (PASP…QTYS), 331-414 (PAVP…RTVA), and 420-508 (GNLL…VSAP). C31 and C82 are disulfide-bonded. Residues 228 to 249 (EAMRAEGAPASPPSTGTRTCTV) form a disordered region. The segment covering 240–249 (PSTGTRTCTV) has biased composition (polar residues). Intrachain disulfides connect C259–C311 and C354–C404. The residue at position 395 (S395) is a Phosphoserine. A Fibronectin type-III 1 domain is found at 515–612 (PPVDPVVKAR…FPGTVHLAPK (98 aa)). 12 Ig-like domains span residues 619–698 (LKAV…MEVR), 701–790 (PGLT…YQLS), 798–884 (LHKD…LRVS), 886–977 (PKVV…DVKE), 978–1066 (PKVV…FRLH), 1070–1161 (PKMM…HITE), 1162–1252 (PKGV…LHIT), 1254–1345 (PKAV…DVSE), 1346–1432 (PKAV…LSFS), 1438–1524 (PKVV…LSFH), 1530–1621 (PKAV…HVAE), and 1622–1719 (PKVV…PQIS). Disulfide bonds link C819-C870, C912-C962, C1004-C1054, C1096-C1146, C1188-C1238, C1280-C1330, C1372-C1422, C1464-C1514, C1556-C1606, C1648-C1698, C1723-C1791, and C1830-C1880. Residues 1731 to 1808 (KEHEDIILTA…DFPVQVEEVA (78 aa)) form the Fibronectin type-III 2 domain. 29 Ig-like domains span residues 1809–1894 (AKFC…LTVS), 1896–1982 (PRVV…AALR), 1987–2071 (PVLF…AKLT), 2077–2162 (VRLV…LVVT), 2165–2249 (PVSF…ASVK), 2289–2380 (PVTL…QSIT), 2468–2559 (PVVL…REVT), 2564–2643 (LQDA…LEVR), 2646–2730 (PVVF…ARVR), 2736–2823 (VGIT…LIVR), 2826–2908 (PAAI…STAS), 2920–2999 (EELT…AQLL), 3003–3092 (RRVH…LRVT), 3095–3183 (PSVF…VHAR), 3184–3268 (PVRF…ATLT), 3273–3356 (PAQF…ASLT), 3359–3444 (PMPA…ATLT), 3449–3532 (PAKF…ATLT), 3537–3620 (PARF…AMLT), 3625–3708 (PIKF…AMLT), 3713–3796 (PSKF…ATLT), 3801–3884 (PARF…ATLT), 3890–3973 (PVFR…ATLT), 3978–4062 (PVRF…ASLS), 4068–4160 (PKFK…PEVT), 4171–4239 (TADE…NHAS), 4248–4337 (PEVT…LKVT), 4340–4427 (NTVV…FLTV), and 4430–4518 (WRLE…ARLT). Disulfide bonds link C2187-C2237, C2311-C2361, and C2490-C2540. C2668 and C2718 are disulfide-bonded. Disulfide bonds link C2848/C2898 and C2937/C2987. The residue at position 2889 (S2889) is a Phosphoserine. Disulfide bonds link C3117–C3167, C3206–C3256, C3295–C3344, C3383–C3432, C3471–C3520, C3559–C3608, C3647–C3696, C3735–C3784, C3823–C3872, C3911–C3961, C4000–C4050, and C4089–C4141. S4015 is modified (phosphoserine). C4453 and C4508 form a disulfide bridge. The Fibronectin type-III 3 domain maps to 4525 to 4619 (PPEDAEVVAR…LPQTVRLAEP (95 aa)). The Ig-like 47 domain occupies 4624-4714 (PPQPSAPESR…AAATFQVALS (91 aa)). The interval 4749 to 4785 (MSREPTLDSISELPEEDGRSQRLPQEAEEVAPDLSEG) is disordered. A Phosphoserine modification is found at S4750. At T4754 the chain carries Phosphothreonine. S4757 is modified (phosphoserine). Residue T4788 is modified to Phosphothreonine. At S4805 the chain carries Phosphoserine. The tract at residues 4820 to 4860 (LKKAGRPGTSPLASKVGAPAAPSVKPQQQQEPLAAVRPPLG) is disordered. The region spanning 4872 to 4901 (MDKAAVKIQAAFKGYKVRKEMKQQEGPMFS) is the IQ domain. Ig-like domains are found at residues 4898–4989 (PMFS…VVVS) and 5126–5215 (PVFL…AELR). 2 cysteine pairs are disulfide-bonded: C4919–C4971 and C5147–C5199. Positions 5238 to 5256 (AQGYLSSREQEGTESTTDE) are enriched in polar residues. Residues 5238-5257 (AQGYLSSREQEGTESTTDEG) are disordered. 2 consecutive Ig-like domains span residues 5260-5349 (PQVV…ARLL) and 5371-5467 (PRML…LHVS). A disordered region spans residues 5554–5596 (AKLQVPGGDSDEDSKTPSASPRHGRSRPSSSIQESSSESEDGD). At S5563 the chain carries Phosphoserine. Phosphothreonine is present on T5569. Positions 5570–5589 (PSASPRHGRSRPSSSIQESS) are enriched in low complexity. S5571 and S5573 each carry phosphoserine. Residues 5600–5667 (EIFDIYVVTA…SPAYLDRRLK (68 aa)) form the SH3 domain. One can recognise a DH domain in the interval 5693-5877 (RLSSVIQELL…SALPQRAENK (185 aa)). The PH domain maps to 5895-6004 (EPIRQGHFIV…WVKEICGIQQ (110 aa)). R5975 is a binding site for a 1,2-diacyl-sn-glycero-3-phospho-(1D-myo-inositol-4,5-bisphosphate). R5980 lines the a 1,2-diacyl-sn-glycero-3-phospho-(1D-myo-inositol-3,4-bisphosphate) pocket. 2 Ig-like domains span residues 6014-6097 (PDFE…GNCS) and 6108-6200 (PRFV…LRIQ). Intrachain disulfides connect C6035–C6087 and C6129–C6182. The tract at residues 6237–6296 (RLLGPKAPGPSTGDLTGPGPCPRGAPALQETGSQPPVTGTSEAPAVPPRVPQPLLHEGPE) is disordered. The span at 6266 to 6277 (ETGSQPPVTGTS) shows a compositional bias: polar residues. In terms of domain architecture, Ig-like 54 spans 6357-6445 (PSMQVTIEDV…GQVLCKAELL (89 aa)). In terms of domain architecture, Protein kinase 1 spans 6468–6721 (YEVKEEIGRG…AAQCLSHPWF (254 aa)). Residues 6474-6482 (IGRGVFGFV) and K6497 contribute to the ATP site. D6587 functions as the Proton acceptor in the catalytic mechanism. Disordered stretches follow at residues 6777–6863 (GVAR…AQGC), 6952–7176 (SGTH…TMRK), and 7217–7272 (VSQS…TPWE). A Phosphoserine modification is found at S6831. Positions 7052–7061 (AVAPCPPGSF) are enriched in pro residues. Residues 7115–7139 (SSPGSASQASSSQVSSLRVGSSQVG) show a composition bias toward low complexity. Polar residues predominate over residues 7160–7172 (DSTPTLQRPQEQA). A compositionally biased stretch (basic and acidic residues) spans 7227 to 7242 (EARAESQSEEQQEARA). Residue S7244 is modified to Phosphoserine. The region spanning 7463–7552 (PTFLRELSDE…GTVTTTGVLR (90 aa)) is the Ig-like 55 domain. A disulfide bond links C7484 and C7536. Residues 7557 to 7649 (PSSSPCPDIG…PSEQVLLGGP (93 aa)) form the Fibronectin type-III 4 domain. A Protein kinase 2 domain is found at 7672 to 7924 (FAFQTQIQRG…ASSCLQCPWL (253 aa)). ATP contacts are provided by residues 7678–7686 (IQRGRFSVV) and K7701. The Proton acceptor role is filled by D7791.

It belongs to the protein kinase superfamily. CAMK Ser/Thr protein kinase family. As to quaternary structure, interacts (via protein kinase domain 2) with CDH2 and (via protein kinase domain 1) with ATP1B1. Isoform 3 interacts with TTN/titin and calmodulin. Isoform 3 interacts with ANK1 isoform Mu17/ank1.5. Mg(2+) is required as a cofactor. In terms of processing, autophosphorylated by protein kinase domains 1 and 2.

The protein localises to the cytoplasm. The protein resides in the myofibril. Its subcellular location is the sarcomere. It is found in the m line. It localises to the z line. The protein localises to the cell membrane. The protein resides in the sarcolemma. Its subcellular location is the nucleus. The enzyme catalyses L-seryl-[protein] + ATP = O-phospho-L-seryl-[protein] + ADP + H(+). The catalysed reaction is L-threonyl-[protein] + ATP = O-phospho-L-threonyl-[protein] + ADP + H(+). Structural component of striated muscles which plays a role in myofibrillogenesis. Probably involved in the assembly of myosin into sarcomeric A bands in striated muscle. Has serine/threonine protein kinase activity and phosphorylates N-cadherin CDH2 and sodium/potassium-transporting ATPase subunit ATP1B1. Binds (via the PH domain) strongly to phosphatidylinositol 3,4-bisphosphate (PtdIns(3,4)P2) and phosphatidylinositol 4,5-bisphosphate (PtdIns(4,5)P2), and to a lesser extent to phosphatidylinositol 3-phosphate (PtdIns(3)P), phosphatidylinositol 4-phosphate (PtdIns(4)P), phosphatidylinositol 5-phosphate (PtdIns(5)P) and phosphatidylinositol 3,4,5-trisphosphate (PtdIns(3,4,5)P3). The protein is Obscurin (OBSCN) of Homo sapiens (Human).